A 244-amino-acid chain; its full sequence is Tyrosine recombinase XerD-like (244 aa).

The 73-residue stretch at 1 to 73 folds into the Core-binding (CB) domain; sequence MRDRISAFLE…ACNQFLYFLY (73 aa). The region spanning 90–244 is the Tyr recombinase domain; that stretch reads AEKKTEKPEI…KTVLTLEKYR (155 aa). Active-site residues include Lys150 and Arg211. The active-site O-(3'-phospho-DNA)-tyrosine intermediate is Tyr243.

This sequence belongs to the 'phage' integrase family. XerD-like subfamily.

Its subcellular location is the cytoplasm. In terms of biological role, putative tyrosine recombinase. Not involved in the cutting and rejoining of the recombining DNA molecules on dif(SL) site. In Streptococcus pneumoniae (strain Hungary19A-6), this protein is Tyrosine recombinase XerD-like.